The chain runs to 408 residues: Lupus La protein (408 aa).

The 93-residue stretch at 7-99 (NEKMAALEAK…RRSPSKPLPE (93 aa)) folds into the HTH La-type RNA-binding domain. 2 positions are modified to phosphoserine: Ser-92 and Ser-94. Residues 111-187 (RSVYIKGFPT…TDLLILFKDD (77 aa)) enclose the RRM domain. Position 116 is an N6-acetyllysine (Lys-116). Residue Thr-120 is modified to Phosphothreonine. Lys-128 carries the post-translational modification N6-acetyllysine. Position 225 is a phosphoserine (Ser-225). Positions 227-348 (EEKIGCLLKF…KGKGNKAAQP (122 aa)) constitute a xRRM domain. 3 positions are modified to N6-acetyllysine: Lys-328, Lys-341, and Lys-360. Positions 329–342 (WKSKGRRFKGKGKG) are enriched in basic residues. Residues 329 to 408 (WKSKGRRFKG…QKTENGAGDQ (80 aa)) are disordered. Thr-362 bears the Phosphothreonine mark. At Ser-366 the chain carries Phosphoserine; by CK2. The segment covering 384 to 395 (RAREETDKEEPA) has biased composition (basic and acidic residues).

As to quaternary structure, interacts with DDX15. May interact with RUFY1. Phosphorylated. The phosphorylation sites are at the C-terminal part of the protein. Post-translationally, the N-terminus is blocked.

The protein localises to the nucleus. Binds to the 3' poly(U) terminus of nascent RNA polymerase III transcripts, protecting them from exonuclease digestion and facilitating their folding and maturation. In case of Coxsackievirus B3 infection, binds to the viral internal ribosome entry site (IRES) and stimulates the IRES-mediated translation. The chain is Lupus La protein (SSB) from Homo sapiens (Human).